The primary structure comprises 154 residues: D-aminoacyl-tRNA deacylase (154 aa).

A Gly-cisPro motif, important for rejection of L-amino acids motif is present at residues 142–143 (GP).

Belongs to the DTD family. In terms of assembly, homodimer.

It localises to the cytoplasm. It carries out the reaction glycyl-tRNA(Ala) + H2O = tRNA(Ala) + glycine + H(+). The catalysed reaction is a D-aminoacyl-tRNA + H2O = a tRNA + a D-alpha-amino acid + H(+). In terms of biological role, an aminoacyl-tRNA editing enzyme that deacylates mischarged D-aminoacyl-tRNAs. Also deacylates mischarged glycyl-tRNA(Ala), protecting cells against glycine mischarging by AlaRS. Acts via tRNA-based rather than protein-based catalysis; rejects L-amino acids rather than detecting D-amino acids in the active site. By recycling D-aminoacyl-tRNA to D-amino acids and free tRNA molecules, this enzyme counteracts the toxicity associated with the formation of D-aminoacyl-tRNA entities in vivo and helps enforce protein L-homochirality. The polypeptide is D-aminoacyl-tRNA deacylase (DTD1) (Yarrowia lipolytica (strain CLIB 122 / E 150) (Yeast)).